Consider the following 743-residue polypeptide: Adhesion defective protein 2 (743 aa).

Residues 1-36 (MADPGLRSGVGLPSQQGQKHDLQKDQKQPHVNNADR) form a disordered region. Residues 18-28 (QKHDLQKDQKQ) show a composition bias toward basic and acidic residues. In terms of domain architecture, LisH spans 38–70 (TQSLLNSYIYDYLIKKDYCEAARAFGREAQVQT). 4 disordered regions span residues 79 to 127 (NSLA…PPPP), 264 to 361 (LQSV…QYPV), 379 to 426 (RNPH…YGFS), and 476 to 692 (KERK…KSSD). A Phosphoserine modification is found at serine 89. Positions 98-114 (ISNNESSDENMNVNNGN) are enriched in polar residues. Low complexity predominate over residues 264 to 281 (LQSVQQQQKQHQQKKTPQ). 5 stretches are compositionally biased toward polar residues: residues 282-297 (SGST…QPTT), 315-353 (IPSS…DTTG), 390-399 (PSSTLPQQQK), 408-426 (QQPS…YGFS), and 482-500 (TSAS…SSVA). Residues 501 to 520 (KTKSTTPKSTDTPTEATTSP) are compositionally biased toward low complexity. Composition is skewed to polar residues over residues 521–544 (VKVS…NMPM) and 556–566 (DHPSNYSNLIE). The span at 567-578 (NSSTSDTNNADN) shows a compositional bias: low complexity. A compositionally biased stretch (polar residues) spans 586 to 602 (WQLQQTHSSRPTPNASS). Low complexity predominate over residues 612-631 (PSSANSNAPTPAPTVNTTNP). Polar residues predominate over residues 661–670 (DNQNQSGKSN). A compositionally biased stretch (low complexity) spans 671-688 (PDTSATPSAPTESTTVAT).

It belongs to the FLO8 family.

It localises to the cytoplasm. It is found in the nucleus. In terms of biological role, probable transcriptional regulator involved in cell adhesion. The polypeptide is Adhesion defective protein 2 (adn2) (Schizosaccharomyces pombe (strain 972 / ATCC 24843) (Fission yeast)).